Reading from the N-terminus, the 330-residue chain is Phenylalanine--tRNA ligase alpha subunit (330 aa).

Residue E246 participates in Mg(2+) binding.

Belongs to the class-II aminoacyl-tRNA synthetase family. Phe-tRNA synthetase alpha subunit type 1 subfamily. Tetramer of two alpha and two beta subunits. Requires Mg(2+) as cofactor.

The protein resides in the cytoplasm. It carries out the reaction tRNA(Phe) + L-phenylalanine + ATP = L-phenylalanyl-tRNA(Phe) + AMP + diphosphate + H(+). This chain is Phenylalanine--tRNA ligase alpha subunit, found in Campylobacter jejuni subsp. doylei (strain ATCC BAA-1458 / RM4099 / 269.97).